Here is a 640-residue protein sequence, read N- to C-terminus: Envelope glycoprotein (640 aa).

An N-terminal signal peptide occupies residues 1–32; the sequence is MACSTFSKPLKDKINPWGPLIILGILIRAGVS. The interval 32–236 is receptor-binding domain (RBD); the sequence is SVQHDSPHKV…RVLNIGPRVP (205 aa). Over 33–584 the chain is Extracellular; sequence VQHDSPHKVF…FNRSPWFTTL (552 aa). N-linked (GlcNAc...) asparagine; by host glycosylation is found at asparagine 43 and asparagine 58. Disulfide bonds link cysteine 113–cysteine 130 and cysteine 122–cysteine 135. The tract at residues 259–284 is disordered; it reads RPPQPPPPGAASIVPETAPPSQQPGT. The N-linked (GlcNAc...) asparagine; by host glycan is linked to asparagine 300. Intrachain disulfides connect cysteine 310-cysteine 313, cysteine 310-cysteine 537, and cysteine 529-cysteine 536. The CXXC motif lies at 310–313; the sequence is CWLC. N-linked (GlcNAc...) asparagine; by host glycans are attached at residues asparagine 332, asparagine 339, asparagine 372, and asparagine 408. The tract at residues 446-466 is fusion peptide; it reads VSLTLALLLGGLTMGGIAAGV. A coiled-coil region spans residues 477-511; sequence QQFQQLHAAVQDDLKEVEKSITNLEKSLTSLSEVV. An immunosuppression region spans residues 512 to 528; sequence LQNRRGLDLLFLKEGGL. The CX6CC motif lies at 529 to 537; sequence CAALKEECC. Residues 585 to 605 traverse the membrane as a helical segment; that stretch reads ISTIMGPLIILLLILLFGPCI. Cysteine 604 is lipidated: S-palmitoyl cysteine; by host. Residues 606 to 640 lie on the Cytoplasmic side of the membrane; that stretch reads LNRLVQFVKDRISVVQALVLTQQYHQLKPLEYEPQ. Residues 629–632 carry the YXXL motif; contains endocytosis signal motif; the sequence is YHQL.

The mature envelope protein (Env) consists of a trimer of SU-TM heterodimers attached by a labile interchain disulfide bond. Specific enzymatic cleavages in vivo yield mature proteins. Envelope glycoproteins are synthesized as an inactive precursor that is N-glycosylated and processed likely by host cell furin or by a furin-like protease in the Golgi to yield the mature SU and TM proteins. The cleavage site between SU and TM requires the minimal sequence [KR]-X-[KR]-R. The R-peptide is released from the C-terminus of the cytoplasmic tail of the TM protein upon particle formation as a result of proteolytic cleavage by the viral protease. Cleavage of this peptide is required for TM to become fusogenic. In terms of processing, the CXXC motif is highly conserved across a broad range of retroviral envelope proteins. It is thought to participate in the formation of a labile disulfide bond possibly with the CX6CC motif present in the transmembrane protein. Isomerization of the intersubunit disulfide bond to an SU intrachain disulfide bond is thought to occur upon receptor recognition in order to allow membrane fusion. Post-translationally, the transmembrane protein is palmitoylated. The R-peptide is palmitoylated.

The protein localises to the virion membrane. The protein resides in the host cell membrane. In terms of biological role, the surface protein (SU) attaches the virus to the host cell by binding to its receptor. This interaction triggers the refolding of the transmembrane protein (TM) and is thought to activate its fusogenic potential by unmasking its fusion peptide. Fusion occurs at the host cell plasma membrane. Functionally, the transmembrane protein (TM) acts as a class I viral fusion protein. Under the current model, the protein has at least 3 conformational states: pre-fusion native state, pre-hairpin intermediate state, and post-fusion hairpin state. During viral and target cell membrane fusion, the coiled coil regions (heptad repeats) assume a trimer-of-hairpins structure, positioning the fusion peptide in close proximity to the C-terminal region of the ectodomain. The formation of this structure appears to drive apposition and subsequent fusion of viral and target cell membranes. Membranes fusion leads to delivery of the nucleocapsid into the cytoplasm. The protein is Envelope glycoprotein (env) of Rauscher mink cell focus-inducing virus.